A 440-amino-acid polypeptide reads, in one-letter code: Ribulose bisphosphate carboxylase large chain (440 aa).

K4 is subject to N6,N6,N6-trimethyllysine. 2 residues coordinate substrate: N113 and T163. K165 (proton acceptor) is an active-site residue. K167 contacts substrate. Mg(2+) contacts are provided by K191, D193, and E194. At K191 the chain carries N6-carboxylysine. H284 (proton acceptor) is an active-site residue. Residues R285, H317, and S369 each contribute to the substrate site.

Belongs to the RuBisCO large chain family. Type I subfamily. Heterohexadecamer of 8 large chains and 8 small chains; disulfide-linked. The disulfide link is formed within the large subunit homodimers. Mg(2+) is required as a cofactor. In terms of processing, the disulfide bond which can form in the large chain dimeric partners within the hexadecamer appears to be associated with oxidative stress and protein turnover.

The protein resides in the plastid. Its subcellular location is the chloroplast. The enzyme catalyses 2 (2R)-3-phosphoglycerate + 2 H(+) = D-ribulose 1,5-bisphosphate + CO2 + H2O. It carries out the reaction D-ribulose 1,5-bisphosphate + O2 = 2-phosphoglycolate + (2R)-3-phosphoglycerate + 2 H(+). Its function is as follows. RuBisCO catalyzes two reactions: the carboxylation of D-ribulose 1,5-bisphosphate, the primary event in carbon dioxide fixation, as well as the oxidative fragmentation of the pentose substrate in the photorespiration process. Both reactions occur simultaneously and in competition at the same active site. The sequence is that of Ribulose bisphosphate carboxylase large chain from Matteuccia struthiopteris (European ostrich fern).